A 361-amino-acid polypeptide reads, in one-letter code: Putative agmatine deiminase (361 aa).

Residue Cys354 is the Amidino-cysteine intermediate of the active site.

The protein belongs to the agmatine deiminase family.

The catalysed reaction is agmatine + H2O = N-carbamoylputrescine + NH4(+). In Streptococcus pneumoniae (strain 70585), this protein is Putative agmatine deiminase.